Reading from the N-terminus, the 343-residue chain is Chlorophyll(ide) b reductase NOL, chloroplastic (343 aa).

The transit peptide at 1–54 directs the protein to the chloroplast; it reads MAATAAYLPLRAQAQVGLAPLRPSGSAAAGARLPGRTARRRLAARGGPEAAGIR. NAD(+) is bound at residue 78–102; that stretch reads ITGSTKGIGYALAKEFLKAGDNVVI. Tyr-228 (proton acceptor) is an active-site residue.

Belongs to the short-chain dehydrogenases/reductases (SDR) family. Interacts with NCY1 to form a complex that acts as a chlorophyll b reductase. Expressed in leaves and stems. Also detected in non-photosynthetic tissues such as roots.

Its subcellular location is the plastid. The protein localises to the chloroplast thylakoid membrane. The catalysed reaction is 7(1)-hydroxychlorophyllide a + NAD(+) = chlorophyllide b + NADH + H(+). It carries out the reaction 7(1)-hydroxychlorophyllide a + NADP(+) = chlorophyllide b + NADPH + H(+). Functionally, required for chlorophyll b degradation. In Oryza sativa subsp. japonica (Rice), this protein is Chlorophyll(ide) b reductase NOL, chloroplastic (NOL).